The primary structure comprises 362 residues: Protein Wnt-16 (362 aa).

The first 29 residues, 1–29 (MDRAALLGLSRLCALWAAVLALFPCGAQG), serve as a signal peptide directing secretion. Intrachain disulfides connect Cys-81–Cys-92, Cys-136–Cys-144, and Cys-146–Cys-165. An N-linked (GlcNAc...) asparagine glycan is attached at Asn-140. N-linked (GlcNAc...) asparagine glycosylation occurs at Asn-186. Intrachain disulfides connect Cys-218-Cys-232, Cys-220-Cys-227, Cys-291-Cys-322, Cys-307-Cys-317, Cys-321-Cys-361, Cys-337-Cys-352, Cys-339-Cys-349, and Cys-344-Cys-345. The O-palmitoleoyl serine; by PORCN moiety is linked to residue Ser-224. The N-linked (GlcNAc...) asparagine glycan is linked to Asn-308.

The protein belongs to the Wnt family. In terms of processing, palmitoleoylation is required for efficient binding to frizzled receptors. Depalmitoleoylation leads to Wnt signaling pathway inhibition.

It localises to the secreted. The protein localises to the extracellular space. The protein resides in the extracellular matrix. Functionally, ligand for members of the frizzled family of seven transmembrane receptors. Probable developmental protein. May be a signaling molecule which affects the development of discrete regions of tissues. Is likely to signal over only few cell diameters. This Bos taurus (Bovine) protein is Protein Wnt-16 (WNT16).